A 414-amino-acid chain; its full sequence is Aspartic protease-like protein pynH (414 aa).

The first 19 residues, Met-1 to Ala-19, serve as a signal peptide directing secretion. Residues Phe-43–Ala-410 form the Peptidase A1 domain. Asn-93, Asn-102, Asn-140, Asn-151, Asn-173, Asn-202, Asn-221, Asn-258, Asn-272, Asn-335, and Asn-366 each carry an N-linked (GlcNAc...) asparagine glycan. Cys-333 and Cys-371 are oxidised to a cystine.

This sequence belongs to the peptidase A1 family.

Its pathway is secondary metabolite biosynthesis. Its function is as follows. Aspartic protease-like protein; part of the gene cluster that mediates the biosynthesis of pyranonigrins, a family of antioxidative compounds. The first step of pyranonigrins biosynthesis is performed by the hybrid PKS-NRPS synthetase that condenses 6 malonyl-CoA units to an acetyl starter unit, to form a 1,3,5-trioxotetradecane-6,8-dienyl-ACP. The enoyl reductase (ER) domain of pynA is likely to be functional during the first two rounds of polyketide chain extension, to generate the saturated C-C bonds of the alkyl side chain. PynA subsequently forms the amide bond between the acyl chain and L-serine. Although pynA has a terminal reductase domain, it appears to require the thioesterase pynI for the release of the straight-chain intermediate from pynA via the formation of a tetramic acid pyranonigrin J. The methyltransferase pynC then coverts pyranonigrin J to pyranonigrin I via N-methylation. The FAD-dependent monooxygenase pynG catalyzes an epoxidation-mediated cyclization to form the dihydro-gamma-pyrone moiety, followed by pynD-catalyzed oxidation of the alcohol to the ketone and enolization to yield the characteristic tetramic acid-fused gamma-pyrone core of pyranonigrin H. Pyranonigrin H is substrate of pynH for dehydration-mediated exo-methylene formation from the serine side chain to produce pyranonigrin E, before the oxidase pynE reduces the exo-methylene of pyranonigrin E into a pendant methyl to form pyranonigrin G. The FAD-linked oxidoreductase pynB performs the reverse reaction and converts pyranonigrin G back to pyranonigrin E. This is Aspartic protease-like protein pynH from Aspergillus niger (strain ATCC MYA-4892 / CBS 513.88 / FGSC A1513).